We begin with the raw amino-acid sequence, 408 residues long: Neutral cholesterol ester hydrolase 1 (408 aa).

Over 1–4 (MRSS) the chain is Cytoplasmic. The chain crosses the membrane as a helical; Signal-anchor for type II membrane protein span at residues 5-25 (CVLLAALLALVAYYVYIPLPS). The Lumenal portion of the chain corresponds to 26-408 (AVSDPWKLML…SYFKWLDQNL (383 aa)). Positions 113-115 (HGG) match the Involved in the stabilization of the negatively charged intermediate by the formation of the oxyanion hole motif. Ser191 is a catalytic residue. Asn270 is a glycosylation site (N-linked (GlcNAc...) asparagine). Residue Asp348 is part of the active site. Asn367 carries an N-linked (GlcNAc...) asparagine glycan. The active site involves His378. Asn389 carries an N-linked (GlcNAc...) asparagine glycan.

Belongs to the 'GDXG' lipolytic enzyme family. In terms of processing, N-glycosylated.

It localises to the cell membrane. The protein localises to the microsome. The catalysed reaction is a 1-O-alkyl-2-acetyl-sn-glycerol + H2O = a 1-O-alkyl-sn-glycerol + acetate + H(+). It carries out the reaction 1-O-hexadecyl-2-acetyl-sn-glycerol + H2O = 1-O-hexadecyl-sn-glycerol + acetate + H(+). It catalyses the reaction a cholesterol ester + H2O = cholesterol + a fatty acid + H(+). The enzyme catalyses cholesteryl (9Z-octadecenoate) + H2O = cholesterol + (9Z)-octadecenoate + H(+). Hydrolyzes 2-acetyl monoalkylglycerol ether (1-O-alkyl-2-acetyl-sn-glycerol), the penultimate precursor of the pathway for de novo synthesis of platelet-activating factor. May be responsible for the hydrolysis of cholesterol esters (such as cholesteryl (9Z-octadecenoate)) in macrophages. Also involved in organ detoxification by hydrolyzing exogenous organophosphorus compounds. The chain is Neutral cholesterol ester hydrolase 1 (Nceh1) from Rattus norvegicus (Rat).